Reading from the N-terminus, the 589-residue chain is MPPPSPDSENGFYPGLPSSMNPAFFPSFSPVSPHGCTGLSVPTSGGGGGGFGGPFSATAVPPPPPPAMNIPQQQPPPPAAPQQPQSRRSPVSPQLQQQHQAAAAAFLQQRNSYNHHQPLLKQSPWSNHQSSGWGTGSMSWGAMHGRDHRRTGNMGIPGTMNQISPLKKPFSGNVIAPPKFTRSTPSLTPKSWIEDNVFRTDNNSNTLLPLQVRSSLQLPAWGSDSLQDSWCTAAGTSRIDQDRSRMYDSLNMHSLENSLIDIMRAEHDPLKGRLSYPHPGTDNLLMLNGRSSLFPIDDGLLDDGHSDQVGVLNSPTCYSAHQNGERIERFSRKVFVGGLPPDIDEDEITASFRRFGPLVVDWPHKAESKSYFPPKGYAFLLFQEESSVQALIDACIEEDGKLYLCVSSPTIKDKPVQIRPWNLSDSDFVMDGSQPLDPRKTIFVGGVPRPLRAVELAMIMDRLYGGVCYAGIDTDPELKYPKGAGRVAFSNQQSYIAAISARFVQLQHGDIDKRVEVKPYVLDDQMCDECQGARCGGKFAPFFCANVTCLQYYCEFCWANIHSRAGREFHKPLVKEGADRPRQIHFRWN.

Disordered stretches follow at residues 1-103 (MPPP…QAAA) and 118-140 (PLLK…SMSW). A compositionally biased stretch (low complexity) spans 24-33 (FFPSFSPVSP). A compositionally biased stretch (gly residues) spans 44 to 53 (SGGGGGGFGG). Positions 60–81 (VPPPPPPAMNIPQQQPPPPAAP) are enriched in pro residues. Composition is skewed to low complexity over residues 82–103 (QQPQ…QAAA) and 130–140 (SSGWGTGSMSW). Ser-89 bears the Phosphoserine mark. RRM domains follow at residues 332–423 (RKVF…PWNL) and 440–522 (KTIF…PYVL).

Belongs to the RRM CPEB family. Interacts with TENT2/GLD2.

The protein localises to the cytoplasm. Functionally, may play a role in translational regulation of stored mRNAs in transcriptionally inactive haploid spermatids. Binds to poly(U) RNA oligomers. Required for cell cycle progression, specifically for the transition from metaphase to anaphase. The sequence is that of Cytoplasmic polyadenylation element-binding protein 2 (CPEB2) from Homo sapiens (Human).